The sequence spans 238 residues: Orotidine 5'-phosphate decarboxylase (238 aa).

Substrate is bound by residues Asp10, Lys32, 59–68 (DLKLHDIPNT), Thr122, Arg184, Gln193, Gly213, and Arg214. Lys61 functions as the Proton donor in the catalytic mechanism.

Belongs to the OMP decarboxylase family. Type 1 subfamily. As to quaternary structure, homodimer.

It carries out the reaction orotidine 5'-phosphate + H(+) = UMP + CO2. Its pathway is pyrimidine metabolism; UMP biosynthesis via de novo pathway; UMP from orotate: step 2/2. Catalyzes the decarboxylation of orotidine 5'-monophosphate (OMP) to uridine 5'-monophosphate (UMP). The chain is Orotidine 5'-phosphate decarboxylase from Bacillus cereus (strain AH187).